A 2151-amino-acid polypeptide reads, in one-letter code: Polycystin-1-like protein 3 (2151 aa).

Positions 1 to 20 (MLLQRRSWLWLYIRIGVILG) are cleaved as a signal peptide. The Extracellular segment spans residues 25-1073 (RKPSIREQHG…IKLLLHVTNN (1049 aa)). The C-type lectin domain occupies 34 to 142 (GGNSCYQLNR…CIEKHHFICQ (109 aa)). 2 disulfides stabilise this stretch: C55/C141 and C116/C133. The N-linked (GlcNAc...) asparagine glycan is linked to N89. Residues 222 to 245 (SLTGRPQVTSDTLASSSPPQGTSD) are compositionally biased toward polar residues. Residues 222-609 (SLTGRPQVTS…SSSPPWPVIT (388 aa)) are disordered. Positions 246–348 (TPASSSPPQV…ASSSPPQGTS (103 aa)) are enriched in low complexity. Composition is skewed to polar residues over residues 349-363 (DTPASSSPPQGTLDT) and 371-600 (QGTS…TPAS). N566, N579, N592, N913, and N951 each carry an N-linked (GlcNAc...) asparagine glycan. The 163-residue stretch at 899–1061 (TSLNTSTDHF…FIVPRTVDVE (163 aa)) folds into the GAIN-B domain. 2 disulfide bridges follow: C1011–C1039 and C1026–C1041. Residues 1011 to 1061 (CYFWDRYNRTWKSDGCQVGPKSTILKTQCLCDHLTFFSSDFFIVPRTVDVE) form a GPS region. Residues 1045-1061 (TFFSSDFFIVPRTVDVE) form a stachel region. A helical membrane pass occupies residues 1074 to 1094 (PVGVSLLSSLLGFYILLAMWA). Residues 1095-1283 (SRKDREDMQK…NQFTRVQRLS (189 aa)) are Cytoplasmic-facing. The region spanning 1119–1236 (SHYLIQVYTG…GNCERDRVFT (118 aa)) is the PLAT domain. Residues 1284–1304 (CCMALLLCDMVINIMFWKMGG) form a helical membrane-spanning segment. Residues 1305–1320 (TTAKRGTEQLGPLAVT) are Extracellular-facing. Residues 1321 to 1341 (LSELLVSIQTSIILFPIHLIF) form a helical membrane-spanning segment. Residues 1342–1533 (GRLFQLIHPP…FCLFRWLKCS (192 aa)) are Cytoplasmic-facing. Residues 1534-1554 (CWLLLGVISLASAFFITLYSL) form a helical membrane-spanning segment. Over 1555 to 1575 (ELDKDQATSWVISMMLSVLQD) the chain is Extracellular. The chain crosses the membrane as a helical span at residues 1576–1596 (IFISQPIKVIFLTLLFSLMAN). At 1597 to 1665 (HMPWLNKDKE…KLTGGTLVQI (69 aa)) the chain is on the cytoplasmic side. Residues 1666–1676 (LFLTLLMTTVY) traverse the membrane as a helical segment. Over 1677–1892 (SAKDSSRFFL…SLTSLQSSER (216 aa)) the chain is Extracellular. Residues N1712 and N1822 are each glycosylated (N-linked (GlcNAc) asparagine). Residues 1893–1921 (GFAWIVSQVVYYLLVCYYAFIQGCRLKRQ) traverse the membrane as a helical segment. The Cytoplasmic portion of the chain corresponds to 1922–1930 (RLAFFTRKR). A helical transmembrane segment spans residues 1931–1949 (NLLDTSIVLISFSILGLSM). Topologically, residues 1950-1980 (QSLSLLHKKMQQYHCDRDRFISFYEALRVNS) are extracellular. The helical transmembrane segment at 1981-2002 (AVTHLRGFLLLFATVRVWDLLR) threads the bilayer. The Cytoplasmic segment spans residues 2003–2019 (HHAQLQVINKTLSKAWD). A helical transmembrane segment spans residues 2020–2044 (EVLGFILIIVVLLSSYAMTFNLLFG). The interval 2043 to 2081 (FGWSISDYQSFFRSIVTVVGLLMGTSKHKEVIALYPILG) is channel pore-region. Residues 2045–2077 (WSISDYQSFFRSIVTVVGLLMGTSKHKEVIALY) lie on the Extracellular side of the membrane. Residues 2078 to 2097 (PILGSLLVLSSIILMGLVII) form a helical membrane-spanning segment. Topologically, residues 2098–2151 (NLFVSAILIAFGKERKACEKEATLTDMLLQKLSSLLGIRLHQNPSEEHADNTGY) are cytoplasmic.

The protein belongs to the polycystin family. In terms of assembly, heterotetramer with PKD2L1, composed of 3 subunit of PKD2L1 and 1 subunit of PKD1L3. Post-translationally, autoproteolytically processed at the GPS region of the GAIN-B domain; this cleavage modulates receptor activity. As to expression, expressed in a subset of taste receptor cells (type III taste cells) distinct from those involved in bitter, sweet and umami taste. Expressed in circumvallate and foliate taste buds, but not in surrounding non-gustatory lingual epithelium cells. Expressed in testis.

It localises to the cell membrane. It catalyses the reaction Ca(2+)(in) = Ca(2+)(out). It carries out the reaction Na(+)(in) = Na(+)(out). The enzyme catalyses K(+)(in) = K(+)(out). The catalysed reaction is Mg(2+)(in) = Mg(2+)(out). Its activity is regulated as follows. The non-selective cation channel is gated following an off-response property by acid: gated open after the removal of acid stimulus, but not during acid application. Non-selective cation channel activity is inhibited by capsaicin. Regulation of non-selective cation channel activity by external Ca(2+) is bimodal, first sensitizing and subsequently inactivating the current. The apo (closed) heterotetramer has an asymmetric selectivity filter (SF) guarded by Lys-2069 in absence of Ca(2+). However, Ca(2+)-entrance to the SF vestibule is accompanied by a swing motion of Lys-2069 on PKD1L3. Its function is as follows. Pore-forming subunit of a heterotetrameric, non-selective cation channel that is permeable to Ca(2+). Also shows permeability towards NA(1+), K(+) and Mg(2+). Heterotetrameric complex channel is activated by external low pH and Ca(2+), but opens only when the extracellular pH rises again and after the removal of acid stimulus. May act as a sour taste receptor in gustatory cells; however, its contribution to sour taste perception is unclear in vivo and may be indirect. In Mus musculus (Mouse), this protein is Polycystin-1-like protein 3.